The sequence spans 267 residues: tRNA pseudouridine synthase A (267 aa).

Asp-51 functions as the Nucleophile in the catalytic mechanism. A substrate-binding site is contributed by Tyr-109.

It belongs to the tRNA pseudouridine synthase TruA family. Homodimer.

It catalyses the reaction uridine(38/39/40) in tRNA = pseudouridine(38/39/40) in tRNA. Formation of pseudouridine at positions 38, 39 and 40 in the anticodon stem and loop of transfer RNAs. The polypeptide is tRNA pseudouridine synthase A (Staphylococcus carnosus (strain TM300)).